Consider the following 1058-residue polypeptide: Ubiquitin-like modifier-activating enzyme 1 (1058 aa).

The segment at 1 to 46 is disordered; sequence MSSSPLSKKRRVSGPDPKPGSNCSPAQSALSEVSSVPTNGMAKNGS. The residue at position 2 (Ser-2) is an N-acetylserine. Phosphoserine is present on residues Ser-4, Ser-13, Ser-21, Ser-24, and Ser-46. Positions 21 to 38 are enriched in polar residues; it reads SNCSPAQSALSEVSSVPT. Phosphotyrosine is present on Tyr-55. A run of 2 repeats spans residues 63–199 and 459–611. The tract at residues 63-611 is 2 approximate repeats; sequence GHEAMKMLQT…GTKGNVQVVI (549 aa). ATP is bound by residues Ala-478, Asp-504, Arg-515, Lys-528, and 576-577; that span reads DN. Lys-528 carries the post-translational modification N6-succinyllysine. Cys-632 functions as the Glycyl thioester intermediate in the catalytic mechanism. Position 671 is an N6-acetyllysine (Lys-671). Thr-800 carries the phosphothreonine modification. Ser-810, Ser-816, Ser-820, and Ser-835 each carry phosphoserine. Lys-980 carries the N6-acetyllysine modification.

This sequence belongs to the ubiquitin-activating E1 family. As to quaternary structure, monomer. Interacts with GAN (via BTB domain). Post-translationally, ISGylated. As to expression, ubiquitously expressed. In testis, expressed in A spermatogonia and spermatids but at very low levels in pachytene spermatocytes.

It localises to the cytoplasm. The protein localises to the mitochondrion. The protein resides in the nucleus. The enzyme catalyses ATP + ubiquitin + [E1 ubiquitin-activating enzyme]-L-cysteine = AMP + diphosphate + S-ubiquitinyl-[E1 ubiquitin-activating enzyme]-L-cysteine.. Its pathway is protein modification; protein ubiquitination. Catalyzes the first step in ubiquitin conjugation to mark cellular proteins for degradation through the ubiquitin-proteasome system. Activates ubiquitin by first adenylating its C-terminal glycine residue with ATP, and thereafter linking this residue to the side chain of a cysteine residue in E1, yielding a ubiquitin-E1 thioester and free AMP. Essential for the formation of radiation-induced foci, timely DNA repair and for response to replication stress. Promotes the recruitment of TP53BP1 and BRCA1 at DNA damage sites. This is Ubiquitin-like modifier-activating enzyme 1 (Uba1) from Mus musculus (Mouse).